Here is a 526-residue protein sequence, read N- to C-terminus: NAD(P)H-quinone oxidoreductase chain 4 2 (526 aa).

14 helical membrane passes run 6–26 (FPWLSTIILFPIIAALFLPLI), 36–56 (WYALTIGLIDFVIIVTAFYTG), 91–111 (LILLTGFITTLAILAAWPVSF), 113–133 (PKLFYFLMLLMYGGQIAVFAV), 137–157 (LLFFFTWELELVPVYLILSIW), 169–189 (FILYTAGGSLFILIAALTMAF), 212–232 (LLLYGGLLIAYGVKLPIFPLH), 243–263 (TAPAHMLLAGILLKMGGYALL), 275–295 (ALFGPVLVILGVVNIVYAALT), 306–326 (IAYSSISHMGFVLIGMASFTD), 332–352 (AMLQMISHGLIGASLFFMVGA), 375–397 (IFAMWTTCSMASLALPGMSGFVA), 417–437 (VIIVFLAAVGVILTPIYLLSM), and 464–484 (VFVIACLLIPIIGIGLYPKAV).

Belongs to the complex I subunit 4 family.

It is found in the cellular thylakoid membrane. The catalysed reaction is a plastoquinone + NADH + (n+1) H(+)(in) = a plastoquinol + NAD(+) + n H(+)(out). It carries out the reaction a plastoquinone + NADPH + (n+1) H(+)(in) = a plastoquinol + NADP(+) + n H(+)(out). Its function is as follows. NDH-1 shuttles electrons from NAD(P)H, via FMN and iron-sulfur (Fe-S) centers, to quinones in the respiratory chain. The immediate electron acceptor for the enzyme in this species is believed to be plastoquinone. Couples the redox reaction to proton translocation (for every two electrons transferred, four hydrogen ions are translocated across the cytoplasmic membrane), and thus conserves the redox energy in a proton gradient. The sequence is that of NAD(P)H-quinone oxidoreductase chain 4 2 from Picosynechococcus sp. (strain ATCC 27264 / PCC 7002 / PR-6) (Agmenellum quadruplicatum).